A 288-amino-acid polypeptide reads, in one-letter code: ATP synthase subunit a (288 aa).

6 helical membrane-spanning segments follow: residues 47-67 (LDSMLWSIGLGIVFCALFWLV), 104-124 (LIAPLALTIFVWIFLMNLMDL), 157-177 (DPNITLGMSFSVFALIIYYSI), 199-219 (PIAKIILIPINFILEFVTLIA), 237-257 (LIFVLIALMPFWIQWALSVPW), and 258-278 (AIFHILIITLQAFVFMMLTIV).

The protein belongs to the ATPase A chain family. F-type ATPases have 2 components, CF(1) - the catalytic core - and CF(0) - the membrane proton channel. CF(1) has five subunits: alpha(3), beta(3), gamma(1), delta(1), epsilon(1). CF(0) has three main subunits: a(1), b(2) and c(9-12). The alpha and beta chains form an alternating ring which encloses part of the gamma chain. CF(1) is attached to CF(0) by a central stalk formed by the gamma and epsilon chains, while a peripheral stalk is formed by the delta and b chains.

It is found in the cell inner membrane. Functionally, key component of the proton channel; it plays a direct role in the translocation of protons across the membrane. The protein is ATP synthase subunit a of Psychrobacter sp. (strain PRwf-1).